The primary structure comprises 325 residues: Aldo-keto reductase family 1 member A1 (325 aa).

N-acetylalanine is present on A2. S4 is modified (phosphoserine). NADP(+)-binding positions include 11–20 (GQKMPLIGLG), T21, W22, and D45. The active-site Proton donor is the Y50. The residue at position 127 (K127) is an N6-acetyllysine; alternate. An N6-succinyllysine; alternate modification is found at K127. K145 bears the N6-succinyllysine mark. Residues S162, N163, S211, L213, S215, S216, K263, S264, V265, T266, R269, Q272, and N273 each coordinate NADP(+). S211 is modified (phosphoserine).

This sequence belongs to the aldo/keto reductase family. In terms of assembly, monomer.

It is found in the cytoplasm. The protein resides in the cytosol. The protein localises to the apical cell membrane. The enzyme catalyses a primary alcohol + NADP(+) = an aldehyde + NADPH + H(+). The catalysed reaction is glycerol + NADP(+) = D-glyceraldehyde + NADPH + H(+). It carries out the reaction glycerol + NADP(+) = L-glyceraldehyde + NADPH + H(+). It catalyses the reaction L-gulonate + NADP(+) = aldehydo-D-glucuronate + NADPH + H(+). The enzyme catalyses L-gulono-1,4-lactone + NADP(+) = D-glucurono-3,6-lactone + NADPH + H(+). The catalysed reaction is allyl alcohol + NADP(+) = acrolein + NADPH + H(+). It carries out the reaction hydroxyacetone + NADP(+) = methylglyoxal + NADPH + H(+). It catalyses the reaction 3-deoxyfructose + NADP(+) = 3-deoxyglucosone + NADPH + H(+). The enzyme catalyses (R)-mevalonate + NADP(+) = (R)-mevaldate + NADPH + H(+). The catalysed reaction is pyridine 3-methanol + NADP(+) = pyridine-3-carbaldehyde + NADPH + H(+). It carries out the reaction S-nitroso-CoA + NADPH + H(+) = sulfinamide-CoA + NADP(+). It catalyses the reaction S-nitrosoglutathione + NADPH + H(+) = S-(hydroxysulfenamide)glutathione + NADP(+). Its function is as follows. Catalyzes the NADPH-dependent reduction of a wide variety of carbonyl-containing compounds to their corresponding alcohols. Displays enzymatic activity towards endogenous metabolites such as aromatic and aliphatic aldehydes, ketones, monosaccharides and bile acids, with a preference for negatively charged substrates, such as glucuronate and succinic semialdehyde. Plays an important role in ascorbic acid biosynthesis by catalyzing the reduction of D-glucuronic acid and D-glucurono-gamma-lactone. Functions as a detoxifiying enzyme by reducing a range of toxic aldehydes. Reduces methylglyoxal and 3-deoxyglucosone, which are present at elevated levels under hyperglycemic conditions and are cytotoxic. Involved also in the detoxification of lipid-derived aldehydes like acrolein. Plays a role in the activation of procarcinogens, such as polycyclic aromatic hydrocarbon trans-dihydrodiols, and in the metabolism of various xenobiotics and drugs. Also acts as an inhibitor of protein S-nitrosylation by mediating degradation of S-nitroso-coenzyme A (S-nitroso-CoA), a cofactor required to S-nitrosylate proteins. S-nitroso-CoA reductase activity is involved in reprogramming intermediary metabolism in renal proximal tubules, notably by inhibiting protein S-nitrosylation of isoform 2 of PKM (PKM2). Also acts as a S-nitroso-glutathione reductase by catalyzing the NADPH-dependent reduction of S-nitrosoglutathione. Displays no reductase activity towards retinoids. In Sus scrofa (Pig), this protein is Aldo-keto reductase family 1 member A1 (AKR1A1).